Consider the following 76-residue polypeptide: Putative small nuclear ribonucleoprotein G-like protein 15 (76 aa).

The 73-residue stretch at 4 to 76 (AHPPELKKFT…IIMLEALERV (73 aa)) folds into the Sm domain.

This sequence belongs to the snRNP Sm proteins family.

It is found in the nucleus. In terms of biological role, associated with snRNP U1, U2, U4/U6 and U5. The polypeptide is Putative small nuclear ribonucleoprotein G-like protein 15 (SNRPGP15) (Homo sapiens (Human)).